A 339-amino-acid chain; its full sequence is Adenosine deaminase (339 aa).

2 residues coordinate Zn(2+): histidine 15 and histidine 17. 3 residues coordinate substrate: histidine 17, aspartate 19, and glycine 172. A Zn(2+)-binding site is contributed by histidine 199. Glutamate 202 (proton donor) is an active-site residue. Residue aspartate 279 coordinates Zn(2+).

This sequence belongs to the metallo-dependent hydrolases superfamily. Adenosine and AMP deaminases family. Adenosine deaminase subfamily. Requires Zn(2+) as cofactor.

It catalyses the reaction adenosine + H2O + H(+) = inosine + NH4(+). The catalysed reaction is 2'-deoxyadenosine + H2O + H(+) = 2'-deoxyinosine + NH4(+). Catalyzes the hydrolytic deamination of adenosine and 2-deoxyadenosine. The sequence is that of Adenosine deaminase from Lacticaseibacillus paracasei (strain ATCC 334 / BCRC 17002 / CCUG 31169 / CIP 107868 / KCTC 3260 / NRRL B-441) (Lactobacillus paracasei).